We begin with the raw amino-acid sequence, 429 residues long: Ribosomal RNA small subunit methyltransferase B (429 aa).

Residues 254-260 (CAAPGGK), Asp277, Asp303, and Asp322 contribute to the S-adenosyl-L-methionine site. Cys375 serves as the catalytic Nucleophile.

Belongs to the class I-like SAM-binding methyltransferase superfamily. RsmB/NOP family.

The protein resides in the cytoplasm. It carries out the reaction cytidine(967) in 16S rRNA + S-adenosyl-L-methionine = 5-methylcytidine(967) in 16S rRNA + S-adenosyl-L-homocysteine + H(+). Functionally, specifically methylates the cytosine at position 967 (m5C967) of 16S rRNA. This is Ribosomal RNA small subunit methyltransferase B from Cronobacter sakazakii (strain ATCC BAA-894) (Enterobacter sakazakii).